Consider the following 730-residue polypeptide: UvrABC system protein C (730 aa).

One can recognise a GIY-YIG domain in the interval 16–95; the sequence is AAPGVYKFRD…IKEFDPRFNV (80 aa). Positions 208–243 constitute a UVR domain; that stretch reads DKLVKDLEKRMQQASEDLDFETAARLRDDIGALRKA. Residues 678-730 form a disordered region; the sequence is ARALPAAVGDDELDKESESSVTSADAPSAESGSGDEGSESRELSMPTTGPSAQ.

This sequence belongs to the UvrC family. In terms of assembly, interacts with UvrB in an incision complex.

It localises to the cytoplasm. Its function is as follows. The UvrABC repair system catalyzes the recognition and processing of DNA lesions. UvrC both incises the 5' and 3' sides of the lesion. The N-terminal half is responsible for the 3' incision and the C-terminal half is responsible for the 5' incision. The polypeptide is UvrABC system protein C (Rhodococcus erythropolis (strain PR4 / NBRC 100887)).